Consider the following 292-residue polypeptide: Cyclin-dependent kinase 5 homolog (292 aa).

The Protein kinase domain occupies 4–285 (YSKIEKLGEG…AAAALKHPYF (282 aa)). Residues 10-18 (LGEGTYGIV) and K33 contribute to the ATP site. T14 is subject to Phosphothreonine. Residue Y15 is modified to Phosphotyrosine. The Proton acceptor role is filled by D126.

This sequence belongs to the protein kinase superfamily. CMGC Ser/Thr protein kinase family. CDC2/CDKX subfamily.

The catalysed reaction is L-seryl-[protein] + ATP = O-phospho-L-seryl-[protein] + ADP + H(+). It catalyses the reaction L-threonyl-[protein] + ATP = O-phospho-L-threonyl-[protein] + ADP + H(+). With respect to regulation, phosphorylation at Thr-14 or Tyr-15 inactivates the enzyme. This Dictyostelium discoideum (Social amoeba) protein is Cyclin-dependent kinase 5 homolog (cdk5).